We begin with the raw amino-acid sequence, 693 residues long: MA3 DOMAIN-CONTAINING TRANSLATION REGULATORY FACTOR 2 (693 aa).

A disordered region spans residues 25-60 (SLDPLPQANMAEDLTKSRRHSPIKVEGSEETWGVED). One can recognise an MI 1 domain in the interval 90–211 (EYKKKATVIV…PPAFLKKQMK (122 aa)). The Nuclear localization signal 1 motif lies at 241-248 (EKRWGGTD). MI domains are found at residues 254-375 (DVKA…SLSA), 389-510 (VFKD…EVLN), and 560-681 (EVKE…EDSQ). The short motif at 430–437 (VKYLITLA) is the Nuclear localization signal 2 element. The segment at 673–693 (ESFASEDSQSKKQNGSSSSSG) is disordered. A compositionally biased stretch (low complexity) spans 683–693 (KKQNGSSSSSG).

Belongs to the PDCD4 family. Binds to EIF4A1. The association with ribosomes is modulated by cellular energy status and TOR activity. As to expression, mostly expressed in reproductive tissues, such as flower buds and flowers, and, to a lower extent, in vegetative tissues, such as leaves, roots and stems.

The protein localises to the nucleus. The protein resides in the cytoplasm. It is found in the cytosol. In terms of biological role, involved in target of rapamycin (TOR)-regulated translation control, especially under energy-deficient conditions. The protein is MA3 DOMAIN-CONTAINING TRANSLATION REGULATORY FACTOR 2 of Arabidopsis thaliana (Mouse-ear cress).